Reading from the N-terminus, the 145-residue chain is ATP synthase epsilon chain (145 aa).

Positions 100-123 (RAQRAKQRAEDAIKTASEKHDSDE) are disordered. Residues 106 to 123 (QRAEDAIKTASEKHDSDE) show a composition bias toward basic and acidic residues.

The protein belongs to the ATPase epsilon chain family. F-type ATPases have 2 components, CF(1) - the catalytic core - and CF(0) - the membrane proton channel. CF(1) has five subunits: alpha(3), beta(3), gamma(1), delta(1), epsilon(1). CF(0) has three main subunits: a, b and c.

The protein localises to the cell membrane. Its function is as follows. Produces ATP from ADP in the presence of a proton gradient across the membrane. The protein is ATP synthase epsilon chain of Latilactobacillus sakei subsp. sakei (strain 23K) (Lactobacillus sakei subsp. sakei).